A 190-amino-acid chain; its full sequence is Interferon alpha-9 (190 aa).

A signal peptide spans 1–23 (MARPFAFLMVLVVISYWSTCSLG). 2 disulfides stabilise this stretch: Cys24/Cys122 and Cys52/Cys162. The N-linked (GlcNAc...) asparagine glycan is linked to Asn101.

Belongs to the alpha/beta interferon family.

Its subcellular location is the secreted. Functionally, produced by macrophages, IFN-alpha have antiviral activities. Interferon stimulates the production of two enzymes: a protein kinase and an oligoadenylate synthetase. This Mus musculus (Mouse) protein is Interferon alpha-9 (Ifna9).